Consider the following 436-residue polypeptide: MNLAGQSGDAGSGHLLFANFNQDNTSLAVGSKSGYKFFSLSSVDKLEQIYECTDTEDVCIVERLFSSSLVAIVSLKAPRKLKVCHFKKGTEICNYSYSNTILAVKLNRQRLIVCLEESLYIHNIRDMKVLHTIRETPPNPAGLCALSINNDNCYLAYPGSATIGEVQVFDTINLRAANMIPAHDSPLAALAFDASGTKLATASEKGTVIRVFSIPEGQKLFEFRRGVKRCVSICSLAFSMDGMFLSASSNTETVHIFKLETVKEKPQEEPTTWTGYFGKVLMASTSYLPSQVTEMFNQGRAFATVRLPFCGHKNICALATIQKIPRLLVGAADGYLYMYNLDPQEGGECTLMKQHKLDGSMEPANEILESASHDRPLVAQTYSAAVTKGTYVPSSPTRHAYTEDLGAVGGACLEDETNSLRLDEDSEHPPMILRTD.

One copy of the WD 1 repeat lies at 182–222 (AHDSPLAALAFDASGTKLATASEKGTVIRVFSIPEGQKLFE). A L/FRRG motif motif is present at residues 223 to 226 (FRRG). WD repeat units lie at residues 228-267 (KRCV…EKPQ) and 311-349 (GHKN…GGEC).

Belongs to the WD repeat PROPPIN family.

The protein resides in the preautophagosomal structure membrane. Its function is as follows. Component of the autophagy machinery that controls the major intracellular degradation process by which cytoplasmic materials are packaged into autophagosomes and delivered to lysosomes for degradation. Involved in an early step of the formation of preautophagosomal structures. The chain is WD repeat domain phosphoinositide-interacting protein 2 (WIPI2) from Gallus gallus (Chicken).